The sequence spans 463 residues: tRNA-2-methylthio-N(6)-dimethylallyladenosine synthase (463 aa).

Residues 5-125 (RKLHIKSYGC…LPQLLAKAEQ (121 aa)) form the MTTase N-terminal domain. Cys14, Cys50, Cys88, Cys166, Cys170, and Cys173 together coordinate [4Fe-4S] cluster. In terms of domain architecture, Radical SAM core spans 152–384 (RARGISAFVT…QQLIDQQQSA (233 aa)). The 63-residue stretch at 387–449 (KAAIGRTVEV…RYSLLGELAS (63 aa)) folds into the TRAM domain.

Belongs to the methylthiotransferase family. MiaB subfamily. In terms of assembly, monomer. Requires [4Fe-4S] cluster as cofactor.

It is found in the cytoplasm. It catalyses the reaction N(6)-dimethylallyladenosine(37) in tRNA + (sulfur carrier)-SH + AH2 + 2 S-adenosyl-L-methionine = 2-methylsulfanyl-N(6)-dimethylallyladenosine(37) in tRNA + (sulfur carrier)-H + 5'-deoxyadenosine + L-methionine + A + S-adenosyl-L-homocysteine + 2 H(+). Its function is as follows. Catalyzes the methylthiolation of N6-(dimethylallyl)adenosine (i(6)A), leading to the formation of 2-methylthio-N6-(dimethylallyl)adenosine (ms(2)i(6)A) at position 37 in tRNAs that read codons beginning with uridine. This Rhodopseudomonas palustris (strain ATCC BAA-98 / CGA009) protein is tRNA-2-methylthio-N(6)-dimethylallyladenosine synthase.